The chain runs to 325 residues: DNA-directed RNA polymerase subunit alpha (325 aa).

The alpha N-terminal domain (alpha-NTD) stretch occupies residues 1-239 (MQQFLRYNIN…DHLKPLIDIN (239 aa)). The segment at 255-325 (EKNKKLSIPI…ELYDLKLKNN (71 aa)) is alpha C-terminal domain (alpha-CTD).

It belongs to the RNA polymerase alpha chain family. Homodimer. The RNAP catalytic core consists of 2 alpha, 1 beta, 1 beta' and 1 omega subunit. When a sigma factor is associated with the core the holoenzyme is formed, which can initiate transcription.

The catalysed reaction is RNA(n) + a ribonucleoside 5'-triphosphate = RNA(n+1) + diphosphate. In terms of biological role, DNA-dependent RNA polymerase catalyzes the transcription of DNA into RNA using the four ribonucleoside triphosphates as substrates. The chain is DNA-directed RNA polymerase subunit alpha from Mycoplasmoides gallisepticum (strain R(low / passage 15 / clone 2)) (Mycoplasma gallisepticum).